A 193-amino-acid chain; its full sequence is Dense granule protein 2 (193 aa).

An N-linked (GlcNAc...) asparagine glycan is attached at asparagine 4. Residues 14–34 (FSPLTVVMLAVTLVAFMGVPL) traverse the membrane as a helical segment. A glycan (N-linked (GlcNAc...) asparagine) is linked at asparagine 74. A disordered region spans residues 75-140 (SSELAGSRDK…APKPVPVRSA (66 aa)). Positions 88-98 (EAEEEAAEVET) are enriched in acidic residues. A helical transmembrane segment spans residues 153 to 173 (HRVIGTAVIAAVVAALLWKFS). Residues 174–193 (RRRSGAPREGGENENGGEEK) are disordered.

The protein belongs to the Gra6 family.

The protein localises to the membrane. The sequence is that of Dense granule protein 2 (DG2) from Neospora caninum (Coccidian parasite).